The following is an 867-amino-acid chain: Piwi-like protein 1 (867 aa).

Positions 1 to 11 are enriched in basic residues; that stretch reads MTGRARARARG. The segment at 1 to 70 is disordered; sequence MTGRARARAR…QRGPQDAPKT (70 aa). The span at 28–44 shows a compositional bias: polar residues; that stretch reads AQKTLPSHPSEQRQSLQ. A PAZ domain is found at 286-397; it reads TVLDFMYSLY…LIPELCYLTG (112 aa). Residues 324 to 326 form a required for binding 2'-O-methylated 3'-end of piRNAs region; it reads TYR. Residues 485–621 are MID region; it reads SRETRVAPLI…LQMNCKMGGE (137 aa). Residues 561-853 enclose the Piwi domain; that stretch reads IVVCILSSTR…LAFLVGQSIH (293 aa). Active-site residues include Asp638, Glu676, Asp708, and His842.

The protein belongs to the argonaute family. Piwi subfamily. Mg(2+) is required as a cofactor. Post-translationally, methylated on arginine residues; required for the interaction with Tudor domain-containing protein and subsequent localization to the meiotic nuage, also named P granule.

It localises to the cytoplasm. Its function is as follows. Endoribonuclease that plays a central role in postnatal germ cells by repressing transposable elements and preventing their mobilization, which is essential for the germline integrity. Acts via the piRNA metabolic process, which mediates the repression of transposable elements during meiosis by forming complexes composed of piRNAs and Piwi proteins and govern the methylation and subsequent repression of transposons. Directly binds methylated piRNAs, a class of 24 to 30 nucleotide RNAs that are generated by a Dicer-independent mechanism and are primarily derived from transposons and other repeated sequence elements. Strongly prefers a uridine in the first position of their guide (g1U preference, also named 1U-bias). Besides their function in transposable elements repression, piRNAs are probably involved in other processes during meiosis such as translation regulation. Not involved in the piRNA amplification loop, also named ping-pong amplification cycle. Acts as an endoribonuclease that cleaves transposon messenger RNAs. The sequence is that of Piwi-like protein 1 (PIWIL1) from Gallus gallus (Chicken).